The primary structure comprises 336 residues: Inositol 2-dehydrogenase (336 aa).

This sequence belongs to the Gfo/Idh/MocA family. Homotetramer.

The enzyme catalyses myo-inositol + NAD(+) = scyllo-inosose + NADH + H(+). In terms of biological role, involved in the oxidation of myo-inositol (MI) to 2-keto-myo-inositol (2KMI or 2-inosose). The polypeptide is Inositol 2-dehydrogenase (Pseudomonas fluorescens (strain SBW25)).